A 237-amino-acid polypeptide reads, in one-letter code: Sugar fermentation stimulation protein homolog (237 aa).

This sequence belongs to the SfsA family.

This chain is Sugar fermentation stimulation protein homolog, found in Thioalkalivibrio sulfidiphilus (strain HL-EbGR7).